A 245-amino-acid polypeptide reads, in one-letter code: 1-(5-phosphoribosyl)-5-[(5-phosphoribosylamino)methylideneamino] imidazole-4-carboxamide isomerase (245 aa).

Catalysis depends on Asp11, which acts as the Proton acceptor. Asp132 (proton donor) is an active-site residue.

It belongs to the HisA/HisF family.

The protein localises to the cytoplasm. The catalysed reaction is 1-(5-phospho-beta-D-ribosyl)-5-[(5-phospho-beta-D-ribosylamino)methylideneamino]imidazole-4-carboxamide = 5-[(5-phospho-1-deoxy-D-ribulos-1-ylimino)methylamino]-1-(5-phospho-beta-D-ribosyl)imidazole-4-carboxamide. Its pathway is amino-acid biosynthesis; L-histidine biosynthesis; L-histidine from 5-phospho-alpha-D-ribose 1-diphosphate: step 4/9. In Bacillus pumilus (strain SAFR-032), this protein is 1-(5-phosphoribosyl)-5-[(5-phosphoribosylamino)methylideneamino] imidazole-4-carboxamide isomerase.